The primary structure comprises 312 residues: MTIQDHTKRKIPRLSATRDCHEIWPTVQEHGAVIIKNLLPLEVVQRLNREVDPYVKIEPIPAAETKDHPNRVLSTTTRMINVLADFSKAYREDVLNNETLNKVSTDAFSVYGDYWVLMGAVMELAPTNPAQPLHRDMRFSHPLVDYLKHDAPPTSINLLIALTPFTVENGATHVILGSHKWPDLSGATMEQTVRAVMEPGDAVLITDNTVHCGGADMTGTETRRLLSLTMGISQITPLESNFTVPRPIIESLTPLAQRLVGWRSQRSSVPRDIGLLTIRGKSIENTLGLKSEQPLPDGMEKGSMQETDIGGQ.

3 residues coordinate Fe cation: His134, Asp136, and His211. Positions 287 to 312 are disordered; that stretch reads LGLKSEQPLPDGMEKGSMQETDIGGQ.

It belongs to the PhyH family. In terms of assembly, homodimer. Fe cation serves as cofactor.

It catalyses the reaction (-)-cyclopeptine + 2-oxoglutarate + O2 = (Z)-dehydrocyclopeptine + succinate + CO2 + H2O. It carries out the reaction (Z)-dehydrocyclopeptine + 2-oxoglutarate + O2 = (-)-cyclopenine + succinate + CO2. The catalysed reaction is (-)-4'-methoxycyclopeptine + 2-oxoglutarate + O2 = (Z)-4'-methoxydehydrocyclopeptine + succinate + CO2 + H2O. The enzyme catalyses (Z)-4'-methoxydehydrocyclopeptine + 2-oxoglutarate + O2 = (-)-4'-methoxycyclopenine + succinate + CO2. It functions in the pathway secondary metabolite biosynthesis. Its pathway is alkaloid biosynthesis. The protein operates within mycotoxin biosynthesis. Functionally, iron/alpha-ketoglutarate-dependent dioxygenase; part of the gene cluster that mediates the biosynthesis of penigequinolones, potent insecticidal alkaloids that contain a highly modified 10-carbon prenyl group. The first stage is catalyzed by the nonribosomal peptide synthetase penN that condenses anthranilic acid and O-methyl-L-tyrosine to produce 4'-methoxycyclopeptin. 4'-methoxycyclopeptin is then converted to 4'-methoxydehydrocyclopeptin by the ketoglutarate-dependent dioxygenase penM through dehydrogenation to form a double bond between C-alpha and C-beta of the O-methyltyrosine side chain. PenM also converts its first product methoxydehydrocyclopeptin to 4'-methoxycyclopenin. The following conversion of 4'methoxycyclopenin into 4'-methoxyviridicatin is catalyzed by the cyclopenase penL. 4'-methoxyviridicatin is the precursor of quinolone natural products, and is further converted to quinolinone B. The prenyltransferase penI then catalyzes the canonical Friedel-Crafts alkylation of quinolinone B with dimethylallyl cation to yield dimethylallyl quinolone, which is subjected to FAD-dependent dehydrogenation by the FAD-linked oxidoreductase penH to yield conjugated aryl diene. The delta(3') double bond then serves as the site of the second alkylation with DMAPP catalyzed by the prenyltransferase penG to yield a carbenium ion intermediate, which can be attacked by H(2)O to yield a styrenyl quinolone containing a C3'-hydroxyprenyl chain, or undergo cyclization to yield yaequinolones J1 and J2. The conversion of the styrenyl quinolone into the tetrahydrofuran-containing yaequinolone C is performed by the FAD-dependent monooxygenase penE and involves epoxidation of the terminal C7'-C8' olefin, followed by epoxide ring opening initiated by the C3' hydroxyl group. The predicted cysteine hydrolase penJ acts as an epoxide hydrolase that enhances the rate of the 5-exo-tet cyclization step, increasing the yield of yaequinolone C. PenF catalyzes the cationic rearrangement of the epoxide formed by penE (before ring opening to produce yaequinolone C) into yaequinolone D. Finally, the short-chain dehydrogenase/reductase (SDR)-like reductase penD, catalyzes both the dehydration of yaequinolone D and the reduction of the resulting oxonium to yield penigequinolone. This Penicillium thymicola protein is Iron/alpha-ketoglutarate-dependent dioxygenase penM.